We begin with the raw amino-acid sequence, 356 residues long: Serendipity locus protein beta (356 aa).

The C2H2-type 1; degenerate zinc finger occupies 171–193 (IPCHICGEMFSSQEVLERHIKAD). C2H2-type zinc fingers lie at residues 201-223 (ATCN…MNLH), 229-251 (LECR…MEVH), 257-279 (YQCD…LMRH), 286-308 (LICE…LRTH), and 315-337 (YPCP…KRVH).

In terms of assembly, binds chromatin; requires N-terminal regions to form protein-protein contacts, in addition to DNA specific recognition by the zinc fingers.

It is found in the nucleus. In terms of biological role, binds to the consensus DNA sequence 5'-YCAGAGATGCGCA-3'. In Drosophila melanogaster (Fruit fly), this protein is Serendipity locus protein beta (Sry-beta).